We begin with the raw amino-acid sequence, 166 residues long: Cofilin-2 (166 aa).

The residue at position 2 (A2) is an N-acetylalanine. S3 is modified (phosphoserine). An ADF-H domain is found at G4–L153. T6 carries the post-translational modification Phosphothreonine. The short motif at K30–K34 is the Nuclear localization signal element.

This sequence belongs to the actin-binding proteins ADF family. Interacts with CSRP3; possibly two molecules of CFL2 can interact with one molecule if CSRP3. Post-translationally, the phosphorylation of Ser-24 may prevent recognition of the nuclear localization signal. In terms of tissue distribution, predominantly expressed in skeletal muscle.

The protein resides in the nucleus matrix. It localises to the cytoplasm. Its subcellular location is the cytoskeleton. Its function is as follows. Controls reversibly actin polymerization and depolymerization in a pH-sensitive manner. It has the ability to bind G- and F-actin in a 1:1 ratio of cofilin to actin. It is the major component of intranuclear and cytoplasmic actin rods. Required for muscle maintenance. May play a role during the exchange of alpha-actin forms during the early postnatal remodeling of the sarcomere. The chain is Cofilin-2 (Cfl2) from Mus musculus (Mouse).